Consider the following 483-residue polypeptide: Regulatory protein ViaA (483 aa).

It belongs to the ViaA family. As to quaternary structure, homodimer. Interacts with RavA.

Its subcellular location is the cytoplasm. In terms of biological role, component of the RavA-ViaA chaperone complex, which may act on the membrane to optimize the function of some of the respiratory chains. ViaA stimulates the ATPase activity of RavA. This Escherichia coli O6:K15:H31 (strain 536 / UPEC) protein is Regulatory protein ViaA.